A 157-amino-acid chain; its full sequence is Protein Smg homolog (157 aa).

This sequence belongs to the Smg family.

This is Protein Smg homolog from Idiomarina loihiensis (strain ATCC BAA-735 / DSM 15497 / L2-TR).